Consider the following 113-residue polypeptide: Large ribosomal subunit protein uL22 (113 aa).

This sequence belongs to the universal ribosomal protein uL22 family. Part of the 50S ribosomal subunit.

In terms of biological role, this protein binds specifically to 23S rRNA; its binding is stimulated by other ribosomal proteins, e.g. L4, L17, and L20. It is important during the early stages of 50S assembly. It makes multiple contacts with different domains of the 23S rRNA in the assembled 50S subunit and ribosome. Functionally, the globular domain of the protein is located near the polypeptide exit tunnel on the outside of the subunit, while an extended beta-hairpin is found that lines the wall of the exit tunnel in the center of the 70S ribosome. This Solibacter usitatus (strain Ellin6076) protein is Large ribosomal subunit protein uL22.